A 2475-amino-acid polypeptide reads, in one-letter code: Polyprotein pp220 (2475 aa).

Gly-2 is lipidated: N-myristoyl glycine; by host. The stretch at 2185 to 2212 forms a coiled coil; it reads KNQLIADLTTIREQLVSMRREVENMIQT.

This sequence belongs to the asfivirus polyprotein pp220 family. Post-translationally, the polyprotein is not glycosylated. In terms of processing, specific enzymatic cleavages in vivo by the viral pS273R protease yield mature proteins.

The protein resides in the host cytoplasm. It is found in the host perinuclear region. Its subcellular location is the virion. The protein localises to the host nucleus. In terms of biological role, essential for the core assembly. Its myristoyl moiety may function as a membrane-anchoring signal to bind the developing core shell to the inner viral envelope. Its function is as follows. The structural protein p34 is a component of the virus core shell. Functionally, the structural protein p14 is a component of the virus core shell. The structural protein p37 is a component of the virus core shell. In terms of biological role, the structural protein p150 is a component of the virus core shell. The polypeptide is Polyprotein pp220 (Ornithodoros (relapsing fever ticks)).